Here is a 400-residue protein sequence, read N- to C-terminus: Signal recognition particle receptor FtsY (400 aa).

Disordered regions lie at residues 12 to 37 and 51 to 86; these read TKKT…QEEQ and NKIK…KDKK. The span at 51–72 shows a compositional bias: basic and acidic residues; sequence NKIKKTKTSETKKQEKPIETLK. GTP-binding positions include 192-199, 278-282, and 342-345; these read GVNGTGKT, DTAGR, and TKMD.

Belongs to the GTP-binding SRP family. FtsY subfamily. In terms of assembly, part of the signal recognition particle protein translocation system, which is composed of SRP and FtsY.

Its subcellular location is the cell membrane. It localises to the cytoplasm. The enzyme catalyses GTP + H2O = GDP + phosphate + H(+). Involved in targeting and insertion of nascent membrane proteins into the cytoplasmic membrane. Acts as a receptor for the complex formed by the signal recognition particle (SRP) and the ribosome-nascent chain (RNC). This Mycoplasma mycoides subsp. mycoides SC (strain CCUG 32753 / NCTC 10114 / PG1) protein is Signal recognition particle receptor FtsY.